The chain runs to 497 residues: Apolipoprotein N-acyltransferase (497 aa).

Helical transmembrane passes span 21–41 (FAPF…ALLW), 51–71 (ALTG…WLYV), 85–105 (VLAL…TGWI), 119–139 (GMVA…FTGF), 157–177 (FAPV…AAWL), and 189–209 (FWLG…IHWT). The region spanning 221–461 (LQGNIPQNMK…GLHSTAQGFG (241 aa)) is the CN hydrolase domain. Glu259 functions as the Proton acceptor in the catalytic mechanism. Lys319 is a catalytic residue. The Nucleophile role is filled by Cys371. The helical transmembrane segment at 472–492 (SLVFALIGLLLLAGSLAAFSG) threads the bilayer.

The protein belongs to the CN hydrolase family. Apolipoprotein N-acyltransferase subfamily.

Its subcellular location is the cell inner membrane. The catalysed reaction is N-terminal S-1,2-diacyl-sn-glyceryl-L-cysteinyl-[lipoprotein] + a glycerophospholipid = N-acyl-S-1,2-diacyl-sn-glyceryl-L-cysteinyl-[lipoprotein] + a 2-acyl-sn-glycero-3-phospholipid + H(+). It functions in the pathway protein modification; lipoprotein biosynthesis (N-acyl transfer). In terms of biological role, catalyzes the phospholipid dependent N-acylation of the N-terminal cysteine of apolipoprotein, the last step in lipoprotein maturation. The protein is Apolipoprotein N-acyltransferase of Nitrosomonas europaea (strain ATCC 19718 / CIP 103999 / KCTC 2705 / NBRC 14298).